The following is a 499-amino-acid chain: Lysine--tRNA ligase (499 aa).

Residues E408 and E415 each coordinate Mg(2+).

Belongs to the class-II aminoacyl-tRNA synthetase family. In terms of assembly, homodimer. Mg(2+) is required as a cofactor.

Its subcellular location is the cytoplasm. The enzyme catalyses tRNA(Lys) + L-lysine + ATP = L-lysyl-tRNA(Lys) + AMP + diphosphate. The sequence is that of Lysine--tRNA ligase from Agrobacterium fabrum (strain C58 / ATCC 33970) (Agrobacterium tumefaciens (strain C58)).